The chain runs to 177 residues: Large ribosomal subunit protein uL6 (177 aa).

This sequence belongs to the universal ribosomal protein uL6 family. In terms of assembly, part of the 50S ribosomal subunit.

This protein binds to the 23S rRNA, and is important in its secondary structure. It is located near the subunit interface in the base of the L7/L12 stalk, and near the tRNA binding site of the peptidyltransferase center. This chain is Large ribosomal subunit protein uL6, found in Verminephrobacter eiseniae (strain EF01-2).